The sequence spans 203 residues: Endo-type membrane-bound lytic murein transglycosylase A (203 aa).

Residues 1-15 form the signal peptide; it reads MKLRWFAFLIVLLAG. Cys16 is lipidated: N-palmitoyl cysteine. Cys16 carries S-diacylglycerol cysteine lipidation.

This sequence belongs to the transglycosylase Slt family.

The protein localises to the cell outer membrane. It catalyses the reaction Endolytic cleavage of the (1-&gt;4)-beta-glycosidic linkage between N-acetylmuramic acid (MurNAc) and N-acetylglucosamine (GlcNAc) residues in peptidoglycan with concomitant formation of a 1,6-anhydrobond in the MurNAc residue.. Murein-degrading enzyme. May play a role in recycling of muropeptides during cell elongation and/or cell division. Preferentially cleaves at a distance of more than two disaccharide units from the ends of the glycan chain. This is Endo-type membrane-bound lytic murein transglycosylase A from Escherichia coli (strain K12 / MC4100 / BW2952).